The chain runs to 767 residues: Syn-copalyl diphosphate synthase, chloroplastic (767 aa).

A chloroplast-targeting transit peptide spans methionine 1 to methionine 47. The disordered stretch occupies residues glycine 45–aspartate 74. The span at glutamate 59 to aspartate 74 shows a compositional bias: basic and acidic residues. Residue lysine 233 coordinates substrate. Positions 365 and 367 each coordinate Mg(2+). The DXDD motif signature appears at aspartate 365–aspartate 368. Residue lysine 453 participates in substrate binding.

It belongs to the terpene synthase family. Mg(2+) serves as cofactor.

The protein resides in the plastid. It is found in the chloroplast. It carries out the reaction (2E,6E,10E)-geranylgeranyl diphosphate = 9alpha-copalyl diphosphate. Its function is as follows. Catalyzes the conversion of geranylgeranyl diphosphate to the phytoalexin precursor syn-copalyl diphosphate. Required for the biosynthesis of momilactones that exude from roots and act as allelochemicals against lowland weeds in paddy soil. The chain is Syn-copalyl diphosphate synthase, chloroplastic from Oryza sativa subsp. japonica (Rice).